A 471-amino-acid chain; its full sequence is 7-dehydrocholesterol reductase (471 aa).

8 consecutive transmembrane segments (helical) span residues leucine 36–alanine 56, leucine 95–histidine 115, leucine 144–phenylalanine 164, tryptophan 173–isoleucine 193, leucine 233–alanine 253, valine 262–tryptophan 282, leucine 302–valine 322, and glutamine 327–phenylalanine 347. Residues lysine 354, arginine 358, leucine 391, tryptophan 396, and asparagine 403–tyrosine 404 each bind NADP(+). Residues leucine 416–leucine 436 form a helical membrane-spanning segment. Residues aspartate 443, cysteine 447–tyrosine 451, and tyrosine 458 contribute to the NADP(+) site.

This sequence belongs to the ERG4/ERG24 family. Interacts with DHCR24; this interaction regulates DHCR7 activity. Interacts with TMEM147. In terms of tissue distribution, highest expression is detected in liver, followed by kidney and brain.

Its subcellular location is the endoplasmic reticulum membrane. The catalysed reaction is cholesterol + NADP(+) = 7-dehydrocholesterol + NADPH + H(+). It catalyses the reaction 7-dehydrodesmosterol + NADPH + H(+) = desmosterol + NADP(+). It carries out the reaction 5,6alpha-epoxy-5alpha-cholestan-3beta-ol + H2O = 5alpha-cholestane-3beta,5,6beta-triol. The enzyme catalyses 5,6beta-epoxy-5beta-cholestan-3beta-ol + H2O = 5alpha-cholestane-3beta,5,6beta-triol. Its pathway is steroid biosynthesis; cholesterol biosynthesis. Its function is as follows. Oxidoreductase that catalyzes the last step of the cholesterol synthesis pathway, which transforms cholesta-5,7-dien-3beta-ol (7-dehydrocholesterol,7-DHC) into cholesterol by reducing the C7-C8 double bond of its sterol core. Can also metabolize cholesta-5,7,24-trien-3beta-ol (7-dehydrodemosterol, 7-DHD) to desmosterol, which is then metabolized by the Delta(24)-sterol reductase (DHCR24) to cholesterol. Modulates ferroptosis (a form of regulated cell death driven by iron-dependent lipid peroxidation) through the metabolic breakdown of the anti-ferroptotic metabolites 7-DHC and 7-DHD which, when accumulated, divert the propagation of peroxyl radical-mediated damage from phospholipid components to its sterol core, protecting plasma and mitochondrial membranes from phospholipid autoxidation. In terms of biological role, component of the microsomal antiestrogen binding site (AEBS), a multiproteic complex at the ER membrane that consists of an association between cholestenol Delta-isomerase/EBP and DHCR7. This complex is responsible for cholesterol-5,6-epoxide hydrolase (ChEH) activity, which consists in the hydration of cholesterol-5,6-epoxides (5,6-EC) into cholestane-3beta,5alpha,6beta-triol (CT). The precise role of each component of this complex has not been described yet. The polypeptide is 7-dehydrocholesterol reductase (Dhcr7) (Rattus norvegicus (Rat)).